The primary structure comprises 293 residues: 1D-myo-inositol 2-acetamido-2-deoxy-alpha-D-glucopyranoside deacetylase (293 aa).

Histidine 16, aspartate 19, and histidine 156 together coordinate Zn(2+).

This sequence belongs to the MshB deacetylase family. The cofactor is Zn(2+).

The enzyme catalyses 1D-myo-inositol 2-acetamido-2-deoxy-alpha-D-glucopyranoside + H2O = 1D-myo-inositol 2-amino-2-deoxy-alpha-D-glucopyranoside + acetate. Catalyzes the deacetylation of 1D-myo-inositol 2-acetamido-2-deoxy-alpha-D-glucopyranoside (GlcNAc-Ins) in the mycothiol biosynthesis pathway. This chain is 1D-myo-inositol 2-acetamido-2-deoxy-alpha-D-glucopyranoside deacetylase, found in Nakamurella multipartita (strain ATCC 700099 / DSM 44233 / CIP 104796 / JCM 9543 / NBRC 105858 / Y-104) (Microsphaera multipartita).